The chain runs to 548 residues: Cilia- and flagella-associated protein 97 (548 aa).

2 positions are modified to phosphoserine: Ser8 and Ser19. Disordered stretches follow at residues 85–297 (NYLT…RQEN), 407–431 (LSRQ…PPKL), and 497–548 (YSPL…LRSH). Positions 91 to 107 (GNERKPKFPSKEQHVEN) are enriched in basic and acidic residues. Positions 112–121 (TRSPSLLTSS) are enriched in low complexity. Residues 152–161 (DYYTDGEESS) are compositionally biased toward acidic residues. Thr155 is modified (phosphothreonine). Phosphoserine is present on residues Ser160 and Ser161. The segment covering 191 to 209 (KASSSSLSSSSSRSSSDCS) has biased composition (low complexity). A compositionally biased stretch (polar residues) spans 214–237 (DMQNKPDSGSSGKRVSSVTPSSPK). At Ser235 the chain carries Phosphoserine. Positions 238-248 (QKCKSGRKSSA) are enriched in basic residues. Ser259 is subject to Phosphoserine. Over residues 264 to 289 (TDVTPASTPDSSPAQPFELSQSQNQK) the composition is skewed to polar residues. The stretch at 383 to 460 (RKNYSFTREE…ALLKRLEAVK (78 aa)) forms a coiled coil. Composition is skewed to polar residues over residues 504–514 (SRTSSATSGLS) and 537–548 (IQCSNSKVLRSH).

This sequence belongs to the CFAP97 family.

The sequence is that of Cilia- and flagella-associated protein 97 from Rattus norvegicus (Rat).